An 89-amino-acid polypeptide reads, in one-letter code: Small ribosomal subunit protein uS15 (89 aa).

The protein belongs to the universal ribosomal protein uS15 family. Part of the 30S ribosomal subunit. Forms a bridge to the 50S subunit in the 70S ribosome, contacting the 23S rRNA.

In terms of biological role, one of the primary rRNA binding proteins, it binds directly to 16S rRNA where it helps nucleate assembly of the platform of the 30S subunit by binding and bridging several RNA helices of the 16S rRNA. Functionally, forms an intersubunit bridge (bridge B4) with the 23S rRNA of the 50S subunit in the ribosome. This is Small ribosomal subunit protein uS15 from Gloeothece citriformis (strain PCC 7424) (Cyanothece sp. (strain PCC 7424)).